Consider the following 158-residue polypeptide: Transcription elongation factor GreA (158 aa).

The protein belongs to the GreA/GreB family.

Its function is as follows. Necessary for efficient RNA polymerase transcription elongation past template-encoded arresting sites. The arresting sites in DNA have the property of trapping a certain fraction of elongating RNA polymerases that pass through, resulting in locked ternary complexes. Cleavage of the nascent transcript by cleavage factors such as GreA or GreB allows the resumption of elongation from the new 3'terminus. GreA releases sequences of 2 to 3 nucleotides. The chain is Transcription elongation factor GreA from Baumannia cicadellinicola subsp. Homalodisca coagulata.